The primary structure comprises 435 residues: Serine--tRNA ligase (435 aa).

The segment at 41–70 is disordered; that stretch reads QVKTEELQAQRNSRSKSIGQAKAKGDHEEA. Positions 49 to 58 are enriched in polar residues; it reads AQRNSRSKSI. An L-serine-binding site is contributed by 242 to 244; that stretch reads TAE. 273–275 provides a ligand contact to ATP; it reads RSE. An L-serine-binding site is contributed by glutamate 296. 360-363 provides a ligand contact to ATP; it reads EISS. Serine 396 provides a ligand contact to L-serine.

The protein belongs to the class-II aminoacyl-tRNA synthetase family. Type-1 seryl-tRNA synthetase subfamily. Homodimer. The tRNA molecule binds across the dimer.

It is found in the cytoplasm. It catalyses the reaction tRNA(Ser) + L-serine + ATP = L-seryl-tRNA(Ser) + AMP + diphosphate + H(+). The catalysed reaction is tRNA(Sec) + L-serine + ATP = L-seryl-tRNA(Sec) + AMP + diphosphate + H(+). The protein operates within aminoacyl-tRNA biosynthesis; selenocysteinyl-tRNA(Sec) biosynthesis; L-seryl-tRNA(Sec) from L-serine and tRNA(Sec): step 1/1. Functionally, catalyzes the attachment of serine to tRNA(Ser). Is also able to aminoacylate tRNA(Sec) with serine, to form the misacylated tRNA L-seryl-tRNA(Sec), which will be further converted into selenocysteinyl-tRNA(Sec). This Aliivibrio fischeri (strain MJ11) (Vibrio fischeri) protein is Serine--tRNA ligase.